The chain runs to 170 residues: Shikimate kinase (170 aa).

An ATP-binding site is contributed by 11–16; it reads LSGKST. Ser-15 is a binding site for Mg(2+). Residues Asp-33, Arg-57, and Gly-79 each coordinate substrate. Arg-119 is an ATP binding site. Position 137 (Arg-137) interacts with substrate.

Belongs to the shikimate kinase family. Monomer. Mg(2+) is required as a cofactor.

It localises to the cytoplasm. It carries out the reaction shikimate + ATP = 3-phosphoshikimate + ADP + H(+). It functions in the pathway metabolic intermediate biosynthesis; chorismate biosynthesis; chorismate from D-erythrose 4-phosphate and phosphoenolpyruvate: step 5/7. In terms of biological role, catalyzes the specific phosphorylation of the 3-hydroxyl group of shikimic acid using ATP as a cosubstrate. The polypeptide is Shikimate kinase (Clostridium botulinum (strain Langeland / NCTC 10281 / Type F)).